We begin with the raw amino-acid sequence, 356 residues long: uncharacterized protein (356 aa).

A disordered region spans residues 25–72 (EENNQENNKKFIEEFYPDKESDKNFSDDDSDDSDDSDDSENSDEEFDN). Basic and acidic residues predominate over residues 31–50 (NNKKFIEEFYPDKESDKNFS). The segment covering 51 to 70 (DDDSDDSDDSDDSENSDEEF) has biased composition (acidic residues). Positions 328 to 356 (EDTLNHSHSNKIKELENKITELKYQNEIN) form a coiled coil.

Belongs to the mimivirus L17/R827 family.

This is an uncharacterized protein from Acanthamoeba polyphaga mimivirus (APMV).